A 703-amino-acid polypeptide reads, in one-letter code: Fanconi-associated nuclease 1 homolog (703 aa).

Mn(2+)-binding residues include glutamate 529, aspartate 651, glutamate 666, and valine 667. Positions 597 to 698 (YIREHQRKTF…EVDVEVCHVS (102 aa)) constitute a VRR-NUC domain.

This sequence belongs to the FAN1 family. Mn(2+) is required as a cofactor. It depends on Mg(2+) as a cofactor.

It localises to the nucleus. It carries out the reaction Hydrolytically removes 5'-nucleotides successively from the 3'-hydroxy termini of 3'-hydroxy-terminated oligonucleotides.. Nuclease required for the repair of DNA interstrand cross-links (ICL). Acts as a 5'-3' exonuclease that anchors at a cut end of DNA and cleaves DNA successively at every third nucleotide, allowing to excise an ICL from one strand through flanking incisions. The polypeptide is Fanconi-associated nuclease 1 homolog (Schizosaccharomyces pombe (strain 972 / ATCC 24843) (Fission yeast)).